The primary structure comprises 632 residues: tRNA uridine 5-carboxymethylaminomethyl modification enzyme MnmG (632 aa).

FAD-binding positions include 15 to 20, Ile-127, and Ser-182; that span reads GAGHAG. An NAD(+)-binding site is contributed by 276 to 290; the sequence is GPRYCPSIEDKIVRF. Gln-373 lines the FAD pocket.

The protein belongs to the MnmG family. Homodimer. Heterotetramer of two MnmE and two MnmG subunits. FAD serves as cofactor.

It is found in the cytoplasm. In terms of biological role, NAD-binding protein involved in the addition of a carboxymethylaminomethyl (cmnm) group at the wobble position (U34) of certain tRNAs, forming tRNA-cmnm(5)s(2)U34. The polypeptide is tRNA uridine 5-carboxymethylaminomethyl modification enzyme MnmG (Streptococcus pyogenes serotype M1).